Reading from the N-terminus, the 507-residue chain is Glucose-6-phosphate isomerase (507 aa).

Residue E338 is the Proton donor of the active site. Active-site residues include H369 and K479.

It belongs to the GPI family.

The protein localises to the cytoplasm. It catalyses the reaction alpha-D-glucose 6-phosphate = beta-D-fructose 6-phosphate. It functions in the pathway carbohydrate biosynthesis; gluconeogenesis. It participates in carbohydrate degradation; glycolysis; D-glyceraldehyde 3-phosphate and glycerone phosphate from D-glucose: step 2/4. Provides a gateway for fructose into the Entner-Doudouroff pathway. Its function is as follows. Catalyzes the reversible isomerization of glucose-6-phosphate to fructose-6-phosphate. The polypeptide is Glucose-6-phosphate isomerase (Zymomonas mobilis subsp. mobilis (strain ATCC 31821 / ZM4 / CP4)).